Here is a 192-residue protein sequence, read N- to C-terminus: Amelogenin, Y isoform (192 aa).

A signal peptide spans 1-16 (MGTWILFACLLGAAYS). Residues 73–192 (QSPQNHALQP…TDKTKREEVD (120 aa)) are disordered. Low complexity predominate over residues 87–105 (PMVPAQQPVVPQQPMMPVP). Over residues 108-117 (HSMTPIQHHQ) the composition is skewed to polar residues. Residues 132–173 (PIQPQPHQPLQPQPPVHPIQRLPPQPPLPPIFPMQPLPPVLP) are compositionally biased toward pro residues.

The protein belongs to the amelogenin family.

It is found in the secreted. Its subcellular location is the extracellular space. The protein resides in the extracellular matrix. Plays a role in the biomineralization of teeth. Seems to regulate the formation of crystallites during the secretory stage of tooth enamel development. Thought to play a major role in the structural organization and mineralization of developing enamel. The polypeptide is Amelogenin, Y isoform (AMELY) (Bos taurus (Bovine)).